Here is a 284-residue protein sequence, read N- to C-terminus: Tropomyosin-1 (284 aa).

Residues 1–284 (MDAIKKKMLA…DSTFAELAGY (284 aa)) adopt a coiled-coil conformation. The disordered stretch occupies residues 103 to 131 (EERLQSATEKLEEASKAADESERGRKVLE).

It belongs to the tropomyosin family. As to quaternary structure, homodimer.

Its function is as follows. Tropomyosin, in association with the troponin complex, plays a central role in the calcium dependent regulation of muscle contraction. This is Tropomyosin-1 from Biomphalaria glabrata (Bloodfluke planorb).